A 264-amino-acid polypeptide reads, in one-letter code: Caffeoyl-CoA O-methyltransferase 2 (264 aa).

Residues 1-20 (MATTATEATKTTAPAQEQQA) show a composition bias toward low complexity. Positions 1–37 (MATTATEATKTTAPAQEQQANGNGNGEQKTRHSEVGH) are disordered. A compositionally biased stretch (basic and acidic residues) spans 28–37 (QKTRHSEVGH). K38 lines the substrate pocket. S-adenosyl-L-methionine contacts are provided by residues T80, E102, 104–105 (GV), S110, D128, and A157. D180 is a binding site for substrate. D180 contributes to the a divalent metal cation binding site. S-adenosyl-L-methionine is bound at residue D182. A divalent metal cation contacts are provided by D206 and N207. N211 serves as a coordination point for substrate.

This sequence belongs to the class I-like SAM-binding methyltransferase superfamily. Cation-dependent O-methyltransferase family. CCoAMT subfamily. The cofactor is a divalent metal cation.

It carries out the reaction (E)-caffeoyl-CoA + S-adenosyl-L-methionine = (E)-feruloyl-CoA + S-adenosyl-L-homocysteine + H(+). It functions in the pathway aromatic compound metabolism; phenylpropanoid biosynthesis. Its function is as follows. Methylates caffeoyl-CoA to feruloyl-CoA and 5-hydroxyferuloyl-CoA to sinapoyl-CoA. Plays a role in the synthesis of feruloylated polysaccharides. Involved in the reinforcement of the plant cell wall. Also involved in the responding to wounding or pathogen challenge by the increased formation of cell wall-bound ferulic acid polymers. The protein is Caffeoyl-CoA O-methyltransferase 2 (CCOAOMT2) of Zea mays (Maize).